The following is a 558-amino-acid chain: Oxygen-dependent choline dehydrogenase (558 aa).

Position 4-33 (4-33 (DYIIIGAGSAGNVLATRLTEDSDTTVLLLE)) interacts with FAD. The active-site Proton acceptor is His-473.

It belongs to the GMC oxidoreductase family. It depends on FAD as a cofactor.

It catalyses the reaction choline + A = betaine aldehyde + AH2. The catalysed reaction is betaine aldehyde + NAD(+) + H2O = glycine betaine + NADH + 2 H(+). Its pathway is amine and polyamine biosynthesis; betaine biosynthesis via choline pathway; betaine aldehyde from choline (cytochrome c reductase route): step 1/1. Its function is as follows. Involved in the biosynthesis of the osmoprotectant glycine betaine. Catalyzes the oxidation of choline to betaine aldehyde and betaine aldehyde to glycine betaine at the same rate. The polypeptide is Oxygen-dependent choline dehydrogenase (Citrobacter koseri (strain ATCC BAA-895 / CDC 4225-83 / SGSC4696)).